A 214-amino-acid chain; its full sequence is Phosphatidylserine decarboxylase proenzyme (214 aa).

The active-site Schiff-base intermediate with substrate; via pyruvic acid is the serine 182. Serine 182 is subject to Pyruvic acid (Ser); by autocatalysis.

This sequence belongs to the phosphatidylserine decarboxylase family. PSD-A subfamily. Heterodimer of a large membrane-associated beta subunit and a small pyruvoyl-containing alpha subunit. Pyruvate serves as cofactor. Post-translationally, is synthesized initially as an inactive proenzyme. Formation of the active enzyme involves a self-maturation process in which the active site pyruvoyl group is generated from an internal serine residue via an autocatalytic post-translational modification. Two non-identical subunits are generated from the proenzyme in this reaction, and the pyruvate is formed at the N-terminus of the alpha chain, which is derived from the carboxyl end of the proenzyme. The post-translation cleavage follows an unusual pathway, termed non-hydrolytic serinolysis, in which the side chain hydroxyl group of the serine supplies its oxygen atom to form the C-terminus of the beta chain, while the remainder of the serine residue undergoes an oxidative deamination to produce ammonia and the pyruvoyl prosthetic group on the alpha chain.

It is found in the cell membrane. It carries out the reaction a 1,2-diacyl-sn-glycero-3-phospho-L-serine + H(+) = a 1,2-diacyl-sn-glycero-3-phosphoethanolamine + CO2. The protein operates within phospholipid metabolism; phosphatidylethanolamine biosynthesis; phosphatidylethanolamine from CDP-diacylglycerol: step 2/2. Catalyzes the formation of phosphatidylethanolamine (PtdEtn) from phosphatidylserine (PtdSer). In Solidesulfovibrio magneticus (strain ATCC 700980 / DSM 13731 / RS-1) (Desulfovibrio magneticus), this protein is Phosphatidylserine decarboxylase proenzyme.